A 189-amino-acid chain; its full sequence is Probable pericyclase scpY (189 aa).

This sequence belongs to the pericyclase pydY family.

The protein operates within mycotoxin biosynthesis. Functionally, probable pericyclase; part of the gene scp cluster that mediates the biosynthesis of a hirsutellone-like compound that has still to be identified. The polypeptide is Probable pericyclase scpY (Mollisia scopiformis (Conifer needle endophyte fungus)).